The chain runs to 314 residues: Porphobilinogen deaminase (314 aa).

An S-(dipyrrolylmethanemethyl)cysteine modification is found at Cys234.

Belongs to the HMBS family. As to quaternary structure, monomer. Dipyrromethane serves as cofactor.

It carries out the reaction 4 porphobilinogen + H2O = hydroxymethylbilane + 4 NH4(+). It participates in porphyrin-containing compound metabolism; protoporphyrin-IX biosynthesis; coproporphyrinogen-III from 5-aminolevulinate: step 2/4. Its function is as follows. Tetrapolymerization of the monopyrrole PBG into the hydroxymethylbilane pre-uroporphyrinogen in several discrete steps. This is Porphobilinogen deaminase from Mycobacterium marinum (strain ATCC BAA-535 / M).